Consider the following 64-residue polypeptide: Large ribosomal subunit protein bL35 (64 aa).

The interval 1 to 41 (MPKMKSHSGASKRFKVSGKGKLLRQQANRRHLLEHKPSRRT) is disordered.

Belongs to the bacterial ribosomal protein bL35 family.

This chain is Large ribosomal subunit protein bL35, found in Nocardia farcinica (strain IFM 10152).